Reading from the N-terminus, the 1243-residue chain is Plasma membrane calcium-transporting ATPase 2 (1243 aa).

The span at Met-1 to Asn-13 shows a compositional bias: polar residues. Residues Met-1–Phe-24 form a disordered region. At Met-1 to Thr-94 the chain is on the cytoplasmic side. Phosphoserine is present on Ser-18. Residues Phe-95–Ala-115 form a helical membrane-spanning segment. At Ile-116–Ile-152 the chain is on the extracellular side. Residues Glu-153–Trp-173 form a helical membrane-spanning segment. The Cytoplasmic portion of the chain corresponds to Ser-174–Leu-390. The interval Gly-334–Lys-381 is disordered. Residues Thr-391 to Ile-410 form a helical membrane-spanning segment. The Extracellular portion of the chain corresponds to Ile-411–Phe-443. Residues Phe-444 to Leu-461 traverse the membrane as a helical segment. The Cytoplasmic segment spans residues Ala-462–Ile-875. Asp-499 functions as the 4-aspartylphosphate intermediate in the catalytic mechanism. Mg(2+)-binding residues include Asp-820 and Asp-824. The helical transmembrane segment at Ser-876–Thr-895 threads the bilayer. Residues Gly-896–Leu-905 lie on the Extracellular side of the membrane. The chain crosses the membrane as a helical span at residues Lys-906–Ala-926. Topologically, residues Thr-927–Leu-946 are cytoplasmic. Residues Ile-947 to Leu-969 traverse the membrane as a helical segment. Residues Leu-970 to Leu-987 are Extracellular-facing. The chain crosses the membrane as a helical span at residues His-988 to Asn-1009. Over Glu-1010–Arg-1028 the chain is Cytoplasmic. The chain crosses the membrane as a helical span at residues Asn-1029–Gly-1050. The Extracellular segment spans residues Gly-1051–Gln-1060. A helical transmembrane segment spans residues Leu-1061–Ala-1082. Residues Thr-1083 to Leu-1243 are Cytoplasmic-facing. Residues Glu-1120, Arg-1132, and Leu-1134 each carry the phosphoserine modification. The interval Leu-1123 to Gln-1140 is calmodulin-binding subdomain A. Thr-1139 carries the phosphothreonine; by PKC modification. Positions Ile-1141–Ser-1150 are calmodulin-binding subdomain B. A phosphoserine mark is found at Ala-1146, Leu-1151, Ser-1163, His-1165, Asp-1177, and Ser-1178. Thr-1188 is modified (phosphothreonine). Residues Ala-1194–Leu-1243 form a disordered region. Low complexity-rich tracts occupy residues Leu-1196–Ser-1211 and Thr-1220–Ser-1234. Residue Ser-1201 is modified to Phosphoserine; by PKA. The residue at position 1211 (Ser-1211) is a Phosphoserine.

This sequence belongs to the cation transport ATPase (P-type) (TC 3.A.3) family. Type IIB subfamily. Interacts with PDZD11. In terms of tissue distribution, mainly expressed in brain cortex. Found in low levels in skeletal muscle, heart muscle, stomach, liver, kidney and lung. Isoforms containing segment B are found in brain cortex and at low levels in other tissues. Isoforms containing segments X and W are found at low levels in all tissues. Isoforms containing segment A and segment Z are found at low levels in skeletal muscle and heart muscle.

Its subcellular location is the cell membrane. It localises to the synapse. It is found in the apical cell membrane. The protein resides in the basolateral cell membrane. The enzyme catalyses Ca(2+)(in) + ATP + H2O = Ca(2+)(out) + ADP + phosphate + H(+). With respect to regulation, up-regulated by calmodulin which increases the affinity of the pump for Ca(2+) ions. Its function is as follows. ATP-driven Ca(2+) ion pump involved in the maintenance of basal intracellular Ca(2+) levels in specialized cells of cerebellar circuit and vestibular and cochlear systems. Uses ATP as an energy source to transport cytosolic Ca(2+) ions across the plasma membrane to the extracellular compartment. Has fast activation and Ca(2+) clearance rate suited to control fast neuronal Ca(2+) dynamics. At parallel fiber to Purkinje neuron synapse, mediates presynaptic Ca(2+) efflux in response to climbing fiber-induced Ca(2+) rise. Provides for fast return of Ca(2+) concentrations back to their resting levels, ultimately contributing to long-term depression induction and motor learning. Plays an essential role in hearing and balance. In cochlear hair cells, shuttles Ca(2+) ions from stereocilia to the endolymph and dissipates Ca(2+) transients generated by the opening of the mechanoelectrical transduction channels. Regulates Ca(2+) levels in the vestibular system, where it contributes to the formation of otoconia. In non-excitable cells, regulates Ca(2+) signaling through spatial control of Ca(2+) ions extrusion and dissipation of Ca(2+) transients generated by store-operated channels. In lactating mammary gland, allows for the high content of Ca(2+) ions in the milk. The sequence is that of Plasma membrane calcium-transporting ATPase 2 from Homo sapiens (Human).